A 134-amino-acid polypeptide reads, in one-letter code: 10 kDa prolamin (134 aa).

Residues 1–24 form the signal peptide; it reads MAAYTSKIFALFALIALSASATTA. The segment at 69 to 76 is octapeptide unique to cereal prolamins; it reads QQQCCMQL.

It belongs to the prolamin family.

It localises to the vacuole. It is found in the aleurone grain. Functionally, seed storage protein; serves as a source of nitrogen, carbon and sulfur for the young developing seedling. The sequence is that of 10 kDa prolamin from Oryza sativa subsp. indica (Rice).